The sequence spans 486 residues: Cardiolipin synthase A (486 aa).

2 helical membrane-spanning segments follow: residues 3-23 (TFYT…IAGV) and 38-58 (MAWL…YLSF). 2 PLD phosphodiesterase domains span residues 219 to 246 (MDLR…VDPR) and 399 to 426 (KDGL…DMRS). Catalysis depends on residues histidine 224, lysine 226, aspartate 231, histidine 404, lysine 406, and aspartate 411.

The protein belongs to the phospholipase D family. Cardiolipin synthase subfamily. ClsA sub-subfamily.

It is found in the cell inner membrane. It carries out the reaction 2 a 1,2-diacyl-sn-glycero-3-phospho-(1'-sn-glycerol) = a cardiolipin + glycerol. Functionally, catalyzes the reversible phosphatidyl group transfer from one phosphatidylglycerol molecule to another to form cardiolipin (CL) (diphosphatidylglycerol) and glycerol. The protein is Cardiolipin synthase A of Pectobacterium carotovorum subsp. carotovorum (strain PC1).